Here is a 323-residue protein sequence, read N- to C-terminus: NADH-cytochrome b5 reductase 2 (323 aa).

A helical membrane pass occupies residues 30–46 (LAPIYTAVGLTGLSVGL). The FAD-binding FR-type domain maps to 72 to 177 (QGWVDLKLSE…KGPLPKYQWE (106 aa)). FAD is bound at residue 180-215 (KHEHIALIAGGTGITPMYQLIRQIFKNPDDKTKVTL).

Belongs to the flavoprotein pyridine nucleotide cytochrome reductase family. The cofactor is FAD.

The protein localises to the mitochondrion outer membrane. It catalyses the reaction 2 Fe(III)-[cytochrome b5] + NADH = 2 Fe(II)-[cytochrome b5] + NAD(+) + H(+). May mediate the reduction of outer membrane cytochrome b5. This is NADH-cytochrome b5 reductase 2 (mcr1) from Aspergillus oryzae (strain ATCC 42149 / RIB 40) (Yellow koji mold).